Consider the following 323-residue polypeptide: rRNA 2'-O-methyltransferase fibrillarin (323 aa).

The disordered stretch occupies residues 1–78 (MRPGFSPRGG…GGGRGGFGGG (78 aa)). Composition is skewed to gly residues over residues 7–44 (PRGG…GGRG) and 63–78 (GRGG…FGGG). R8, R17, R23, and R29 each carry asymmetric dimethylarginine. Residues 174 to 175 (TT), 193 to 194 (EF), 218 to 219 (DA), and 238 to 241 (DVAQ) each bind S-adenosyl-L-methionine. The tract at residues 276–308 (APEAVFAAEVKKMQQENMKPQEQLTLEPYERDH) is helical.

This sequence belongs to the methyltransferase superfamily. Fibrillarin family. Component of box C/D small nucleolar ribonucleoprotein (snoRNP) particles. Part of the small subunit (SSU) processome, composed of more than 70 proteins and the RNA chaperone small nucleolar RNA (snoRNA) U3. In terms of processing, by homology to other fibrillarins, some or all of the N-terminal domain arginines are modified to asymmetric dimethylarginine (DMA).

It is found in the nucleus. Its subcellular location is the nucleolus. The protein localises to the nucleoplasm. The enzyme catalyses L-glutaminyl-[histone H2A] + S-adenosyl-L-methionine = N(5)-methyl-L-glutaminyl-[histone H2A] + S-adenosyl-L-homocysteine + H(+). It catalyses the reaction a ribonucleotide in rRNA + S-adenosyl-L-methionine = a 2'-O-methylribonucleotide in rRNA + S-adenosyl-L-homocysteine + H(+). It carries out the reaction a ribonucleotide in U6 snRNA + S-adenosyl-L-methionine = a 2'-O-methylribonucleotide in U6 snRNA + S-adenosyl-L-homocysteine + H(+). S-adenosyl-L-methionine-dependent methyltransferase that has the ability to methylate both RNAs and proteins. Involved in pre-rRNA processing by catalyzing the site-specific 2'-hydroxyl methylation of ribose moieties in pre-ribosomal RNA. Probably catalyzes 2'-O-methylation of U6 snRNAs in box C/D RNP complexes. U6 snRNA 2'-O-methylation is required for mRNA splicing fidelity. Also acts as a protein methyltransferase by mediating methylation of 'Gln-105' of histone H2A (H2AQ104me), a modification that impairs binding of the FACT complex and is specifically present at 35S ribosomal DNA locus. Part of the small subunit (SSU) processome, first precursor of the small eukaryotic ribosomal subunit. During the assembly of the SSU processome in the nucleolus, many ribosome biogenesis factors, an RNA chaperone and ribosomal proteins associate with the nascent pre-rRNA and work in concert to generate RNA folding, modifications, rearrangements and cleavage as well as targeted degradation of pre-ribosomal RNA by the RNA exosome. The chain is rRNA 2'-O-methyltransferase fibrillarin (fbl) from Xenopus laevis (African clawed frog).